An 820-amino-acid polypeptide reads, in one-letter code: MLYASGRLLAARAATTLSAPPRARGPALRGKRRELQIPWHLETPSYDPLTGQRTRPGVPPARRVILRKGRMPPAIGGGLAGSELRPRRGRCVPQAARAVSRDVVPQAAARKLKRPAWSSRRFQAAGWWATLAVVTLLSFATRFHRLDQPAHICWDETHFGKMGSYYINRTFFFDVHPPLGKMLIGLAGYLSGYDGTFLFQKPGDRYEHHSYMGMRGFCAFLGSWLIPFAYLTVLDLSKSFPAALLTAALLTFDTGCLTLSQYILLDPILMFFIMAAMLSMVKYNSCANRPFSAPWWFWLSLTGISLAGALGVKFVGLFIIVQVGLNTISDLWHLFGDLSLSLVTVGKHLTARILCLIVLPLVLYVTIFAVHVMVLNKSGPGDGFFSSAFQARLSGNSLHNASIPEHLAYGSVITVKNLRMAIGYLHSHRHLYPEGIGARQQQVTTYLHKDYNNLWIIKKYNANTDPLDPSFPVEFVRHGDIIRLEHKETTRNLHSHYHEAPLTRKHYQVTGYGINGTGDSNDFWRIEVVNRKFGNRIKVLRSRIRLIHLVTGCVLGSSGKILPKWGWEQLEVTCTPYLKETTNSIWNIEEHINPKLPNISLDVLQPSFPEILLESHMVMIRGNNGLKPKDNEFTSKPWHWPINYQGLRFSGANDTDFRVYLLGNPVVWWLNLVSIVLYLLSGSTIAVAMQRGIQLPAELQGLTKVLLRGGGQLLLGWMLHYFPFFLMGRILYFHHYFPAMLFSSMLTGILWDTLLRLCAWGLAPSPLGRRIHAVGILSLLLTTAYSFYLFHPLAYGMVGPLAQEPESPMAGLRWLESWDF.

A helical membrane pass occupies residues 124–144 (AAGWWATLAVVTLLSFATRFH). Residue N168 is glycosylated (N-linked (GlcNAc...) asparagine). 5 helical membrane passes run 170-190 (TFFF…AGYL), 216-236 (GFCA…VLDL), 261-281 (QYIL…LSMV), 301-321 (LTGI…FIIV), and 353-373 (ILCL…VHVM). 2 N-linked (GlcNAc...) asparagine glycosylation sites follow: N376 and N400. MIR domains are found at residues 404 to 460 (PEHL…IKKY), 473 to 529 (VEFV…IEVV), and 534 to 591 (GNRI…IEEH). N-linked (GlcNAc...) asparagine glycosylation is present at N515. N598 and N653 each carry an N-linked (GlcNAc...) asparagine glycan. A run of 4 helical transmembrane segments spans residues 659–679 (VYLL…VLYL), 713–733 (LLLG…ILYF), 735–755 (HYFP…DTLL), and 774–794 (VGIL…HPLA).

The protein belongs to the glycosyltransferase 39 family. N-glycosylated. As to expression, ubiquitous. Highly expressed in the acrosome of cap phase spermatids, in spermatocytes and liver. Isoform 1 seems to be testis-specific.

It localises to the endoplasmic reticulum membrane. The enzyme catalyses a di-trans,poly-cis-dolichyl beta-D-mannosyl phosphate + L-seryl-[protein] = 3-O-(alpha-D-mannosyl)-L-seryl-[protein] + a di-trans,poly-cis-dolichyl phosphate + H(+). It carries out the reaction a di-trans,poly-cis-dolichyl beta-D-mannosyl phosphate + L-threonyl-[protein] = 3-O-(alpha-D-mannosyl)-L-threonyl-[protein] + a di-trans,poly-cis-dolichyl phosphate + H(+). It participates in protein modification; protein glycosylation. Functionally, transfers mannosyl residues to the hydroxyl group of serine or threonine residues. Coexpression of both POMT1 and POMT2 is necessary for enzyme activity, expression of either POMT1 or POMT2 alone is insufficient. Essentially dedicated to O-mannosylation of alpha-DAG1 and few other proteins but not of cadherins and protocaherins. The sequence is that of Protein O-mannosyl-transferase 2 (Pomt2) from Mus musculus (Mouse).